We begin with the raw amino-acid sequence, 451 residues long: Hexokinase (451 aa).

The Hexokinase domain occupies 6–445 (QQLFEKVVEI…SGKGAAAIAA (440 aa)). Residues 63–195 (NGTETGNFLA…ELNVKCVAVV (133 aa)) form a hexokinase small subdomain region. An ATP-binding site is contributed by 74 to 79 (DLGGTN). Residues S144, 161–162 (TK), 196–197 (ND), 222–223 (TN), E249, and E283 contribute to the substrate site. The interval 196–434 (NDTVGTLASC…TRFCLRLSED (239 aa)) is hexokinase large subdomain. Residues 288–289 (GM), 325–329 (TRYLT), and 401–405 (SLYKF) contribute to the ATP site.

It belongs to the hexokinase family. As to quaternary structure, monomer.

It catalyses the reaction a D-hexose + ATP = a D-hexose 6-phosphate + ADP + H(+). It carries out the reaction D-mannose + ATP = D-mannose 6-phosphate + ADP + H(+). The enzyme catalyses D-fructose + ATP = D-fructose 6-phosphate + ADP + H(+). The catalysed reaction is D-glucose + ATP = D-glucose 6-phosphate + ADP + H(+). Its pathway is carbohydrate metabolism; hexose metabolism. It participates in carbohydrate degradation; glycolysis; D-glyceraldehyde 3-phosphate and glycerone phosphate from D-glucose: step 1/4. Its function is as follows. Catalyzes the phosphorylation of various hexoses to hexose 6-phosphate. The polypeptide is Hexokinase (Schistosoma mansoni (Blood fluke)).